We begin with the raw amino-acid sequence, 499 residues long: Glycerol kinase (499 aa).

Position 13 (threonine 13) interacts with ADP. ATP contacts are provided by threonine 13, threonine 14, and serine 15. A sn-glycerol 3-phosphate-binding site is contributed by threonine 13. Arginine 17 lines the ADP pocket. 4 residues coordinate sn-glycerol 3-phosphate: arginine 83, glutamate 84, tyrosine 135, and aspartate 245. Arginine 83, glutamate 84, tyrosine 135, aspartate 245, and glutamine 246 together coordinate glycerol. The ADP site is built by threonine 267 and glycine 310. ATP-binding residues include threonine 267, glycine 310, glutamine 314, and glycine 411. 2 residues coordinate ADP: glycine 411 and asparagine 415.

Belongs to the FGGY kinase family.

It carries out the reaction glycerol + ATP = sn-glycerol 3-phosphate + ADP + H(+). It participates in polyol metabolism; glycerol degradation via glycerol kinase pathway; sn-glycerol 3-phosphate from glycerol: step 1/1. With respect to regulation, inhibited by fructose 1,6-bisphosphate (FBP). Key enzyme in the regulation of glycerol uptake and metabolism. Catalyzes the phosphorylation of glycerol to yield sn-glycerol 3-phosphate. In Xanthomonas campestris pv. campestris (strain ATCC 33913 / DSM 3586 / NCPPB 528 / LMG 568 / P 25), this protein is Glycerol kinase.